The sequence spans 490 residues: Betaine aldehyde dehydrogenase (490 aa).

K(+) is bound at residue Asp-93. 150–152 (GAW) serves as a coordination point for NAD(+). Lys-162 acts as the Charge relay system in catalysis. 176 to 179 (KPSE) serves as a coordination point for NAD(+). Residue Val-180 participates in K(+) binding. 230–233 (GIAS) is a binding site for NAD(+). Position 246 (Leu-246) interacts with K(+). Residue Glu-252 is the Proton acceptor of the active site. Residues Gly-254, Cys-286, and Glu-387 each contribute to the NAD(+) site. Cys-286 serves as the catalytic Nucleophile. Cys-286 carries the post-translational modification Cysteine sulfenic acid (-SOH). Lys-457 and Gly-460 together coordinate K(+). Glu-464 functions as the Charge relay system in the catalytic mechanism.

This sequence belongs to the aldehyde dehydrogenase family. Dimer of dimers. The cofactor is K(+).

The catalysed reaction is betaine aldehyde + NAD(+) + H2O = glycine betaine + NADH + 2 H(+). It functions in the pathway amine and polyamine biosynthesis; betaine biosynthesis via choline pathway; betaine from betaine aldehyde: step 1/1. Its function is as follows. Involved in the biosynthesis of the osmoprotectant glycine betaine. Catalyzes the irreversible oxidation of betaine aldehyde to the corresponding acid. In Yersinia pseudotuberculosis serotype IB (strain PB1/+), this protein is Betaine aldehyde dehydrogenase.